A 399-amino-acid polypeptide reads, in one-letter code: Bifunctional enzyme IspD/IspF (399 aa).

The interval 1–239 (MHTWALLLAA…SSEKKNMQVP (239 aa)) is 2-C-methyl-D-erythritol 4-phosphate cytidylyltransferase. Residues 240–399 (CVGWGYDVHR…AVTALRRVSS (160 aa)) are 2-C-methyl-D-erythritol 2,4-cyclodiphosphate synthase. A divalent metal cation is bound by residues Asp246 and His248. Residues 246–248 (DVH) and 273–274 (HS) contribute to the 4-CDP-2-C-methyl-D-erythritol 2-phosphate site. Residue His281 coordinates a divalent metal cation. 4-CDP-2-C-methyl-D-erythritol 2-phosphate contacts are provided by residues 295 to 297 (DIG), 300 to 304 (FPDTD), 371 to 374 (TTEE), and Phe378.

The protein in the N-terminal section; belongs to the IspD/TarI cytidylyltransferase family. IspD subfamily. It in the C-terminal section; belongs to the IspF family. A divalent metal cation serves as cofactor.

It catalyses the reaction 2-C-methyl-D-erythritol 4-phosphate + CTP + H(+) = 4-CDP-2-C-methyl-D-erythritol + diphosphate. The catalysed reaction is 4-CDP-2-C-methyl-D-erythritol 2-phosphate = 2-C-methyl-D-erythritol 2,4-cyclic diphosphate + CMP. It participates in isoprenoid biosynthesis; isopentenyl diphosphate biosynthesis via DXP pathway; isopentenyl diphosphate from 1-deoxy-D-xylulose 5-phosphate: step 2/6. The protein operates within isoprenoid biosynthesis; isopentenyl diphosphate biosynthesis via DXP pathway; isopentenyl diphosphate from 1-deoxy-D-xylulose 5-phosphate: step 4/6. Bifunctional enzyme that catalyzes the formation of 4-diphosphocytidyl-2-C-methyl-D-erythritol from CTP and 2-C-methyl-D-erythritol 4-phosphate (MEP) (IspD), and catalyzes the conversion of 4-diphosphocytidyl-2-C-methyl-D-erythritol 2-phosphate (CDP-ME2P) to 2-C-methyl-D-erythritol 2,4-cyclodiphosphate (ME-CPP) with a corresponding release of cytidine 5-monophosphate (CMP) (IspF). The polypeptide is Bifunctional enzyme IspD/IspF (Oleidesulfovibrio alaskensis (strain ATCC BAA-1058 / DSM 17464 / G20) (Desulfovibrio alaskensis)).